A 456-amino-acid chain; its full sequence is Enolase (456 aa).

Glutamine 167 serves as a coordination point for (2R)-2-phosphoglycerate. Residue glutamate 209 is the Proton donor of the active site. Positions 250, 312, and 339 each coordinate Mg(2+). Residues lysine 364, arginine 393, serine 394, and lysine 415 each contribute to the (2R)-2-phosphoglycerate site. Lysine 364 (proton acceptor) is an active-site residue.

This sequence belongs to the enolase family. Mg(2+) is required as a cofactor.

It localises to the cytoplasm. The protein localises to the secreted. The protein resides in the cell surface. It catalyses the reaction (2R)-2-phosphoglycerate = phosphoenolpyruvate + H2O. It participates in carbohydrate degradation; glycolysis; pyruvate from D-glyceraldehyde 3-phosphate: step 4/5. In terms of biological role, catalyzes the reversible conversion of 2-phosphoglycerate (2-PG) into phosphoenolpyruvate (PEP). It is essential for the degradation of carbohydrates via glycolysis. The protein is Enolase of Mycoplasmopsis pulmonis (strain UAB CTIP) (Mycoplasma pulmonis).